Consider the following 328-residue polypeptide: MEGSSNSPDRQSSGGSPPEERGGGGSGGGGGRSAAGEPVRSRWTPKPEQILILESIFNSGMVNPPKDETVRIRKLLERFGAVGDANVFYWFQNRRSRSRRRQRQMQAAAAAAAAAASSSSPSANTSPAAASAATVQVGLPPVAVVHTMAMGGSACQYEQQASSSSSSGSTGGSSLGLFAHGAGASGAGGYLQASCGASASASSALAPGLMGDVVDSGGSDDLFAISRQMGFVGSPRCSPASSPATPSSAATAAQQQFYSCQLPAATITVFINGVPMEMPRGPIDLRAMFGQDVMLVHSTGALLPVNDYGILMQSLQIGESYFLVARPT.

A compositionally biased stretch (polar residues) spans Met1–Gln11. The interval Met1–Pro45 is disordered. Residues Gly23–Ser33 are compositionally biased toward gly residues. The segment at residues Pro38 to Gln102 is a DNA-binding region (homeobox; WUS-type).

The protein belongs to the WUS homeobox family.

It is found in the nucleus. Functionally, transcription factor which may be involved in developmental processes. The polypeptide is WUSCHEL-related homeobox 6 (WOX6) (Oryza sativa subsp. indica (Rice)).